We begin with the raw amino-acid sequence, 466 residues long: Cytochrome P450 85A (466 aa).

The helical transmembrane segment at 2–22 (ALFMAILGVLVLLLCLCSALL) threads the bilayer. Residue C414 coordinates heme.

The protein belongs to the cytochrome P450 family. Heme is required as a cofactor.

Its subcellular location is the membrane. Catalyzes the C6-oxidation step in brassinosteroids biosynthesis. This chain is Cytochrome P450 85A, found in Phaseolus vulgaris (Kidney bean).